A 515-amino-acid polypeptide reads, in one-letter code: GMP synthase [glutamine-hydrolyzing] (515 aa).

Positions 10–200 (TIIVLDFGSQ…VFGVCGCSEG (191 aa)) constitute a Glutamine amidotransferase type-1 domain. Cysteine 87 serves as the catalytic Nucleophile. Active-site residues include histidine 174 and glutamate 176. The 190-residue stretch at 201-390 (WNMENFIEVE…LGIPDEIVWR (190 aa)) folds into the GMPS ATP-PPase domain. 228–234 (SGGVDSS) provides a ligand contact to ATP.

Homodimer.

It carries out the reaction XMP + L-glutamine + ATP + H2O = GMP + L-glutamate + AMP + diphosphate + 2 H(+). The protein operates within purine metabolism; GMP biosynthesis; GMP from XMP (L-Gln route): step 1/1. Catalyzes the synthesis of GMP from XMP. The polypeptide is GMP synthase [glutamine-hydrolyzing] (Bacillus thuringiensis subsp. konkukian (strain 97-27)).